The following is a 479-amino-acid chain: Chromosomal replication initiator protein DnaA (479 aa).

The interval 1–94 (MKGGTMVENA…QTLWRTERED (94 aa)) is domain I, interacts with DnaA modulators. The segment at 94 to 142 (DIKGVELQVKRGLPEVSMGDAEDGEDGSGEGHELATQAAAPESRSDLAV) is domain II. The segment at 106–137 (LPEVSMGDAEDGEDGSGEGHELATQAAAPESR) is disordered. Residues 143–359 (PLDPRFTFDT…GALNRLIAHA (217 aa)) are domain III, AAA+ region. The ATP site is built by G188, G190, K191, and T192. The tract at residues 360 to 479 (DLVGRPVTLD…VELLRRMLEG (120 aa)) is domain IV, binds dsDNA.

This sequence belongs to the DnaA family. In terms of assembly, oligomerizes as a right-handed, spiral filament on DNA at oriC.

The protein localises to the cytoplasm. In terms of biological role, plays an essential role in the initiation and regulation of chromosomal replication. ATP-DnaA binds to the origin of replication (oriC) to initiate formation of the DNA replication initiation complex once per cell cycle. Binds the DnaA box (a 9 base pair repeat at the origin) and separates the double-stranded (ds)DNA. Forms a right-handed helical filament on oriC DNA; dsDNA binds to the exterior of the filament while single-stranded (ss)DNA is stabiized in the filament's interior. The ATP-DnaA-oriC complex binds and stabilizes one strand of the AT-rich DNA unwinding element (DUE), permitting loading of DNA polymerase. After initiation quickly degrades to an ADP-DnaA complex that is not apt for DNA replication. Binds acidic phospholipids. This Gluconobacter oxydans (strain 621H) (Gluconobacter suboxydans) protein is Chromosomal replication initiator protein DnaA.